The sequence spans 127 residues: Thioredoxin domain-containing protein 8 (127 aa).

In terms of domain architecture, Thioredoxin spans Val2–Met127. Cys32 and Cys35 are disulfide-bonded.

This sequence belongs to the thioredoxin family. As to expression, testis-specific. Only expressed during spermiogenesis, prominently in the Golgi apparatus of pachytene spermatocytes and round and elongated spermatids, with a transient localization in the developing acrosome of round spermatids (at protein level).

The protein localises to the cytoplasm. The protein resides in the golgi apparatus. May be required for post-translational modifications of proteins required for acrosomal biogenesis. May act by reducing disulfide bonds within the sperm. The polypeptide is Thioredoxin domain-containing protein 8 (Txndc8) (Mus musculus (Mouse)).